The chain runs to 365 residues: 3-isopropylmalate dehydrogenase (365 aa).

Residues Arg96, Arg106, Arg134, and Asp224 each coordinate substrate. Residues Asp224, Asp248, and Asp252 each contribute to the Mg(2+) site. Residue 288 to 300 (GSAPTIAKQNIAN) participates in NAD(+) binding.

This sequence belongs to the isocitrate and isopropylmalate dehydrogenases family. LeuB type 1 subfamily. In terms of assembly, homodimer. Mg(2+) is required as a cofactor. The cofactor is Mn(2+).

The protein resides in the cytoplasm. It carries out the reaction (2R,3S)-3-isopropylmalate + NAD(+) = 4-methyl-2-oxopentanoate + CO2 + NADH. It functions in the pathway amino-acid biosynthesis; L-leucine biosynthesis; L-leucine from 3-methyl-2-oxobutanoate: step 3/4. Functionally, catalyzes the oxidation of 3-carboxy-2-hydroxy-4-methylpentanoate (3-isopropylmalate) to 3-carboxy-4-methyl-2-oxopentanoate. The product decarboxylates to 4-methyl-2 oxopentanoate. The chain is 3-isopropylmalate dehydrogenase from Dehalococcoides mccartyi (strain ATCC BAA-2266 / KCTC 15142 / 195) (Dehalococcoides ethenogenes (strain 195)).